The primary structure comprises 237 residues: Phosphoribosylaminoimidazole-succinocarboxamide synthase (237 aa).

Belongs to the SAICAR synthetase family.

The catalysed reaction is 5-amino-1-(5-phospho-D-ribosyl)imidazole-4-carboxylate + L-aspartate + ATP = (2S)-2-[5-amino-1-(5-phospho-beta-D-ribosyl)imidazole-4-carboxamido]succinate + ADP + phosphate + 2 H(+). It participates in purine metabolism; IMP biosynthesis via de novo pathway; 5-amino-1-(5-phospho-D-ribosyl)imidazole-4-carboxamide from 5-amino-1-(5-phospho-D-ribosyl)imidazole-4-carboxylate: step 1/2. The polypeptide is Phosphoribosylaminoimidazole-succinocarboxamide synthase (Baumannia cicadellinicola subsp. Homalodisca coagulata).